The sequence spans 88 residues: Small ribosomal subunit protein bS16 (88 aa).

The protein belongs to the bacterial ribosomal protein bS16 family.

In Leptospira borgpetersenii serovar Hardjo-bovis (strain L550), this protein is Small ribosomal subunit protein bS16.